The following is a 313-amino-acid chain: Malate dehydrogenase (313 aa).

NAD(+)-binding positions include 8–13 and Asp33; that span reads GAGNVG. Substrate is bound by residues Arg83 and Arg89. Residues Asn96 and 119–121 contribute to the NAD(+) site; that span reads ISN. The substrate site is built by Asn121 and Arg152. The active-site Proton acceptor is His176.

It belongs to the LDH/MDH superfamily. MDH type 3 family.

The catalysed reaction is (S)-malate + NAD(+) = oxaloacetate + NADH + H(+). Catalyzes the reversible oxidation of malate to oxaloacetate. This is Malate dehydrogenase from Parabacteroides distasonis (strain ATCC 8503 / DSM 20701 / CIP 104284 / JCM 5825 / NCTC 11152).